Reading from the N-terminus, the 876-residue chain is Neurotrypsin (876 aa).

A signal peptide spans Met1–Gly20. N-linked (GlcNAc...) asparagine glycosylation is present at Asn26. Residues Leu29–Pro89 are disordered. Over residues Tyr43–Pro54 the composition is skewed to low complexity. The segment covering Thr57–Ala72 has biased composition (pro residues). Residues Cys94–Cys166 form the Kringle domain. Cystine bridges form between Cys94–Cys166, Cys110–Cys150, Cys139–Cys164, Cys196–Cys260, Cys209–Cys270, Cys240–Cys250, Cys306–Cys370, Cys319–Cys380, Cys350–Cys360, Cys413–Cys476, Cys426–Cys486, Cys456–Cys466, Cys526–Cys590, Cys539–Cys600, Cys570–Cys580, Cys620–Cys751, Cys662–Cys678, Cys766–Cys832, Cys795–Cys809, and Cys822–Cys851. SRCR domains are found at residues Val171 to Phe272, Ile281 to Pro382, Ile388 to Pro488, and Val501 to Tyr602. Residues Cys620–Arg631 form a zymogen activation region region. One can recognise a Peptidase S1 domain in the interval Ile632 to Lys875. His677 (charge relay system) is an active-site residue. N-linked (GlcNAc...) asparagine glycosylation occurs at Asn684. The active-site Charge relay system is the Asp727. The Charge relay system role is filled by Ser826.

This sequence belongs to the peptidase S1 family.

The protein resides in the secreted. Its function is as follows. Plays a role in neuronal plasticity and the proteolytic action may subserve structural reorganizations associated with learning and memory operations. The sequence is that of Neurotrypsin (PRSS12) from Gorilla gorilla gorilla (Western lowland gorilla).